We begin with the raw amino-acid sequence, 109 residues long: Putative double-stranded DNA mimic protein YciU (109 aa).

Belongs to the putative dsDNA mimic protein family.

May act as a double-stranded DNA (dsDNA) mimic. Probably regulates the activity of a dsDNA-binding protein. The chain is Putative double-stranded DNA mimic protein YciU from Salmonella choleraesuis (strain SC-B67).